A 180-amino-acid chain; its full sequence is NAD(P)H-quinone oxidoreductase subunit I, chloroplastic (180 aa).

4Fe-4S ferredoxin-type domains are found at residues 55 to 84 and 95 to 124; these read GRIH…VDWR and LNYS…MTEE. Positions 64, 67, 70, 74, 104, 107, 110, and 114 each coordinate [4Fe-4S] cluster.

Belongs to the complex I 23 kDa subunit family. NDH is composed of at least 16 different subunits, 5 of which are encoded in the nucleus. [4Fe-4S] cluster serves as cofactor.

It is found in the plastid. It localises to the chloroplast thylakoid membrane. It carries out the reaction a plastoquinone + NADH + (n+1) H(+)(in) = a plastoquinol + NAD(+) + n H(+)(out). The catalysed reaction is a plastoquinone + NADPH + (n+1) H(+)(in) = a plastoquinol + NADP(+) + n H(+)(out). Functionally, NDH shuttles electrons from NAD(P)H:plastoquinone, via FMN and iron-sulfur (Fe-S) centers, to quinones in the photosynthetic chain and possibly in a chloroplast respiratory chain. The immediate electron acceptor for the enzyme in this species is believed to be plastoquinone. Couples the redox reaction to proton translocation, and thus conserves the redox energy in a proton gradient. This Amborella trichopoda protein is NAD(P)H-quinone oxidoreductase subunit I, chloroplastic.